The following is a 960-amino-acid chain: Phosphoenolpyruvate carboxylase 3 (960 aa).

Ser-8 is subject to Phosphoserine. Catalysis depends on residues His-167 and Lys-597.

This sequence belongs to the PEPCase type 1 family. As to quaternary structure, homotetramer. It depends on Mg(2+) as a cofactor.

It localises to the cytoplasm. It carries out the reaction oxaloacetate + phosphate = phosphoenolpyruvate + hydrogencarbonate. It participates in photosynthesis; C4 acid pathway. With respect to regulation, by light-reversible phosphorylation. Functionally, through the carboxylation of phosphoenolpyruvate (PEP) it forms oxaloacetate, a four-carbon dicarboxylic acid source for the tricarboxylic acid cycle. The protein is Phosphoenolpyruvate carboxylase 3 of Sorghum bicolor (Sorghum).